Consider the following 240-residue polypeptide: Probable transcriptional regulatory protein PBPRB1582 (240 aa).

The protein belongs to the TACO1 family.

It is found in the cytoplasm. The chain is Probable transcriptional regulatory protein PBPRB1582 from Photobacterium profundum (strain SS9).